The following is a 328-amino-acid chain: Porphobilinogen deaminase (328 aa).

Cysteine 245 carries the post-translational modification S-(dipyrrolylmethanemethyl)cysteine.

It belongs to the HMBS family. Monomer. It depends on dipyrromethane as a cofactor.

It carries out the reaction 4 porphobilinogen + H2O = hydroxymethylbilane + 4 NH4(+). It participates in porphyrin-containing compound metabolism; protoporphyrin-IX biosynthesis; coproporphyrinogen-III from 5-aminolevulinate: step 2/4. The protein operates within porphyrin-containing compound metabolism; chlorophyll biosynthesis. Its function is as follows. Tetrapolymerization of the monopyrrole PBG into the hydroxymethylbilane pre-uroporphyrinogen in several discrete steps. The chain is Porphobilinogen deaminase from Gloeobacter violaceus (strain ATCC 29082 / PCC 7421).